Here is a 558-residue protein sequence, read N- to C-terminus: Dihydroxy-acid dehydratase (558 aa).

Asp78 lines the Mg(2+) pocket. Cys119 contributes to the [2Fe-2S] cluster binding site. The Mg(2+) site is built by Asp120 and Lys121. Lys121 bears the N6-carboxylysine mark. Residue Cys192 participates in [2Fe-2S] cluster binding. Mg(2+) is bound at residue Glu446. Ser472 serves as the catalytic Proton acceptor.

Belongs to the IlvD/Edd family. In terms of assembly, homodimer. Requires [2Fe-2S] cluster as cofactor. Mg(2+) is required as a cofactor.

It catalyses the reaction (2R)-2,3-dihydroxy-3-methylbutanoate = 3-methyl-2-oxobutanoate + H2O. The enzyme catalyses (2R,3R)-2,3-dihydroxy-3-methylpentanoate = (S)-3-methyl-2-oxopentanoate + H2O. It participates in amino-acid biosynthesis; L-isoleucine biosynthesis; L-isoleucine from 2-oxobutanoate: step 3/4. It functions in the pathway amino-acid biosynthesis; L-valine biosynthesis; L-valine from pyruvate: step 3/4. Functionally, functions in the biosynthesis of branched-chain amino acids. Catalyzes the dehydration of (2R,3R)-2,3-dihydroxy-3-methylpentanoate (2,3-dihydroxy-3-methylvalerate) into 2-oxo-3-methylpentanoate (2-oxo-3-methylvalerate) and of (2R)-2,3-dihydroxy-3-methylbutanoate (2,3-dihydroxyisovalerate) into 2-oxo-3-methylbutanoate (2-oxoisovalerate), the penultimate precursor to L-isoleucine and L-valine, respectively. This Campylobacter jejuni subsp. jejuni serotype O:2 (strain ATCC 700819 / NCTC 11168) protein is Dihydroxy-acid dehydratase.